The primary structure comprises 331 residues: Fructose-1,6-bisphosphatase class 1 (331 aa).

Glu-80, Asp-98, Leu-100, and Asp-101 together coordinate Mg(2+). Substrate-binding positions include 101-104 (DGSS) and Asn-189. Glu-261 contributes to the Mg(2+) binding site.

The protein belongs to the FBPase class 1 family. Homotetramer. Requires Mg(2+) as cofactor.

Its subcellular location is the cytoplasm. It carries out the reaction beta-D-fructose 1,6-bisphosphate + H2O = beta-D-fructose 6-phosphate + phosphate. The protein operates within carbohydrate biosynthesis; gluconeogenesis. The chain is Fructose-1,6-bisphosphatase class 1 from Rhodobacter capsulatus (strain ATCC BAA-309 / NBRC 16581 / SB1003).